The primary structure comprises 233 residues: Large ribosomal subunit protein uL1 (233 aa).

It belongs to the universal ribosomal protein uL1 family. Part of the 50S ribosomal subunit.

In terms of biological role, binds directly to 23S rRNA. The L1 stalk is quite mobile in the ribosome, and is involved in E site tRNA release. Protein L1 is also a translational repressor protein, it controls the translation of the L11 operon by binding to its mRNA. This chain is Large ribosomal subunit protein uL1, found in Shewanella piezotolerans (strain WP3 / JCM 13877).